The primary structure comprises 298 residues: MTCNLLVILGPTASGKTRLGVAAARALDGEIISADSRQVFRGMDIGTGKDLSEYGDVPYHLIDICEAGSEFSVFDFQERFCTAYADIRKRGRLPVLVGGTGLYLDCVLRNYRLVKVPENPVLRAELDPLSMDQLAERLRALKPEQHNTTDLGHRERLLRAIEIAEGEKACGETGPVLPGLRPLVFGVRWERAVLRRRITARLKERLDAGLIDEVQALLDAGVAHRMLEHYGLEYRLVSQHLRGELNRNDMFQKLNSAIHQFAKRQDTWFRRMERQGVQIHWLDGAGDPLQGLLRVFMS.

10 to 17 (GPTASGKT) is a binding site for ATP. Substrate is bound at residue 12 to 17 (TASGKT). An interaction with substrate tRNA region spans residues 35 to 38 (DSRQ).

This sequence belongs to the IPP transferase family. Monomer. The cofactor is Mg(2+).

It carries out the reaction adenosine(37) in tRNA + dimethylallyl diphosphate = N(6)-dimethylallyladenosine(37) in tRNA + diphosphate. Functionally, catalyzes the transfer of a dimethylallyl group onto the adenine at position 37 in tRNAs that read codons beginning with uridine, leading to the formation of N6-(dimethylallyl)adenosine (i(6)A). The protein is tRNA dimethylallyltransferase 2 of Syntrophotalea carbinolica (strain DSM 2380 / NBRC 103641 / GraBd1) (Pelobacter carbinolicus).